The following is a 609-amino-acid chain: Phosphomethylpyrimidine synthase (609 aa).

Substrate contacts are provided by residues N219, M248, Y277, H313, 333–335 (SRG), 374–377 (DGLR), and E413. H417 contacts Zn(2+). Y440 contributes to the substrate binding site. Position 481 (H481) interacts with Zn(2+). C561, C564, and C569 together coordinate [4Fe-4S] cluster.

The protein belongs to the ThiC family. The cofactor is [4Fe-4S] cluster.

The enzyme catalyses 5-amino-1-(5-phospho-beta-D-ribosyl)imidazole + S-adenosyl-L-methionine = 4-amino-2-methyl-5-(phosphooxymethyl)pyrimidine + CO + 5'-deoxyadenosine + formate + L-methionine + 3 H(+). The protein operates within cofactor biosynthesis; thiamine diphosphate biosynthesis. Functionally, catalyzes the synthesis of the hydroxymethylpyrimidine phosphate (HMP-P) moiety of thiamine from aminoimidazole ribotide (AIR) in a radical S-adenosyl-L-methionine (SAM)-dependent reaction. This Deinococcus geothermalis (strain DSM 11300 / CIP 105573 / AG-3a) protein is Phosphomethylpyrimidine synthase.